We begin with the raw amino-acid sequence, 213 residues long: Peptidyl-tRNA hydrolase (213 aa).

TRNA is bound at residue Tyr26. Catalysis depends on His31, which acts as the Proton acceptor. TRNA contacts are provided by Tyr78, Asn80, and Asn126.

It belongs to the PTH family. As to quaternary structure, monomer.

It localises to the cytoplasm. It carries out the reaction an N-acyl-L-alpha-aminoacyl-tRNA + H2O = an N-acyl-L-amino acid + a tRNA + H(+). Functionally, hydrolyzes ribosome-free peptidyl-tRNAs (with 1 or more amino acids incorporated), which drop off the ribosome during protein synthesis, or as a result of ribosome stalling. In terms of biological role, catalyzes the release of premature peptidyl moieties from peptidyl-tRNA molecules trapped in stalled 50S ribosomal subunits, and thus maintains levels of free tRNAs and 50S ribosomes. The polypeptide is Peptidyl-tRNA hydrolase (Nostoc punctiforme (strain ATCC 29133 / PCC 73102)).